The following is a 521-amino-acid chain: Na(+)/H(+) antiporter ApNhaP (521 aa).

Over 1–18 (MTIEAAMGEEAIKENLEQ) the chain is Periplasmic. The helical transmembrane segment at 19 to 39 (FLIVLSVSLGVATLSQISSFF) threads the bilayer. Topologically, residues 40-41 (RQ) are cytoplasmic. The helical transmembrane segment at 42 to 62 (IPYTLLLVIVGLGLAFVDIRL) threads the bilayer. Over 63 to 94 (VNLSPELILEIFLPPLLFEAAWNIRWRNLKKN) the chain is Periplasmic. A helical membrane pass occupies residues 95–115 (LFPVVLLAIIGVVISVVGIGF). Over 116-126 (SLNYFSGLSLP) the chain is Cytoplasmic. The helical transmembrane segment at 127–147 (IALLVGAILAATDPVSVIALF) threads the bilayer. At 148 to 164 (RELGVGERLTVLMEGES) the chain is on the periplasmic side. A helical transmembrane segment spans residues 165–185 (LFNDGVAVVAFSLLVGIPLGT). Over 186–194 (QEFSVTNTL) the chain is Cytoplasmic. A helical membrane pass occupies residues 195–215 (IQFVTLQGIGIGCGGVIGFGI). Topologically, residues 216–245 (SYLTQRFDLPLVEQSLTLVSAYGTYLITEE) are periplasmic. The helical transmembrane segment at 246-266 (LGGSGVIGVVTVGLILGNFGS) threads the bilayer. Residues 267–276 (RIGMNPRTRL) are Cytoplasmic-facing. A helical transmembrane segment spans residues 277–297 (LVSEFWEFIAFFVNSIVFLLI). Over 298–311 (GDQINIRGLADNGQ) the chain is Periplasmic. The helical transmembrane segment at 312 to 332 (LILITIIALVIIRAISIYGLG) threads the bilayer. Topologically, residues 333–349 (TISNLITKQDISWQEET) are cytoplasmic. The helical transmembrane segment at 350 to 370 (VLWWGGLRGSVSIALALSVPV) threads the bilayer. The Periplasmic portion of the chain corresponds to 371–380 (MLDGRQDIIE). Residues 381-401 (AVFGVVLFTLLVQGLTMQTVI) traverse the membrane as a helical segment. Residues 402–521 (EKLGLIGDRA…LLQEVLAKPE (120 aa)) are Cytoplasmic-facing.

This sequence belongs to the monovalent cation:proton antiporter 1 (CPA1) transporter (TC 2.A.36) family.

It localises to the cell inner membrane. Na(+)/H(+) antiporter that extrudes sodium in exchange for external protons. Also shows high Ca(2+)/H(+) antiporter activity at alkaline pH. Does not catalyze exchange between Li(+) and H(+). The protein is Na(+)/H(+) antiporter ApNhaP (apnhaP) of Aphanothece halophytica.